The primary structure comprises 202 residues: MSRYRGPRLRITRRLGDLPGLTRKAAKRSHPPGQHGQARRKRSEYAIRLEEKQKLRFNYGISERQLVRYVKKARAQEGSTGTNLLKLLENRLDNVCFRLGFGPTIPGSRQLVNHGHVTVNGRITDIASYQCKAGDVIAIRDNKASKQLAQANLEFPGLANVPPHLELDKTKLSAKISAKTDREWVAIEINELLVVEYYSRKV.

The span at 1 to 13 (MSRYRGPRLRITR) shows a compositional bias: basic residues. The tract at residues 1 to 43 (MSRYRGPRLRITRRLGDLPGLTRKAAKRSHPPGQHGQARRKRS) is disordered. The region spanning 90 to 152 (NRLDNVCFRL…KASKQLAQAN (63 aa)) is the S4 RNA-binding domain.

Belongs to the universal ribosomal protein uS4 family. As to quaternary structure, part of the 30S ribosomal subunit. Contacts protein S5. The interaction surface between S4 and S5 is involved in control of translational fidelity.

In terms of biological role, one of the primary rRNA binding proteins, it binds directly to 16S rRNA where it nucleates assembly of the body of the 30S subunit. Functionally, with S5 and S12 plays an important role in translational accuracy. In Prochlorococcus marinus (strain NATL2A), this protein is Small ribosomal subunit protein uS4.